The following is a 337-amino-acid chain: Delta-aminolevulinic acid dehydratase (337 aa).

Lys205 (schiff-base intermediate with substrate) is an active-site residue. The 5-aminolevulinate site is built by Arg215 and Lys229. Glu245 lines the Mg(2+) pocket. Lys260 functions as the Schiff-base intermediate with substrate in the catalytic mechanism. 5-aminolevulinate-binding residues include Ser286 and Tyr324.

This sequence belongs to the ALAD family. As to quaternary structure, homooctamer; formed by oligomerization of dimers. It depends on Mg(2+) as a cofactor.

It catalyses the reaction 2 5-aminolevulinate = porphobilinogen + 2 H2O + H(+). It participates in porphyrin-containing compound metabolism; protoporphyrin-IX biosynthesis; coproporphyrinogen-III from 5-aminolevulinate: step 1/4. Its activity is regulated as follows. Stimulated by magnesium ions. Catalyzes an early step in the biosynthesis of tetrapyrroles. Binds two molecules of 5-aminolevulinate per subunit, each at a distinct site, and catalyzes their condensation to form porphobilinogen. The chain is Delta-aminolevulinic acid dehydratase (hemB) from Pseudomonas aeruginosa (strain ATCC 15692 / DSM 22644 / CIP 104116 / JCM 14847 / LMG 12228 / 1C / PRS 101 / PAO1).